A 181-amino-acid polypeptide reads, in one-letter code: Protein Syd (181 aa).

Belongs to the Syd family.

It localises to the cell inner membrane. In terms of biological role, interacts with the SecY protein in vivo. May bind preferentially to an uncomplexed state of SecY, thus functioning either as a chelating agent for excess SecY in the cell or as a regulatory factor that negatively controls the translocase function. The chain is Protein Syd from Klebsiella pneumoniae (strain 342).